The sequence spans 259 residues: Deoxyribose-phosphate aldolase (259 aa).

Aspartate 102 serves as the catalytic Proton donor/acceptor. Lysine 167 serves as the catalytic Schiff-base intermediate with acetaldehyde. Catalysis depends on lysine 201, which acts as the Proton donor/acceptor.

The protein belongs to the DeoC/FbaB aldolase family. DeoC type 2 subfamily.

The protein localises to the cytoplasm. It catalyses the reaction 2-deoxy-D-ribose 5-phosphate = D-glyceraldehyde 3-phosphate + acetaldehyde. The protein operates within carbohydrate degradation; 2-deoxy-D-ribose 1-phosphate degradation; D-glyceraldehyde 3-phosphate and acetaldehyde from 2-deoxy-alpha-D-ribose 1-phosphate: step 2/2. Catalyzes a reversible aldol reaction between acetaldehyde and D-glyceraldehyde 3-phosphate to generate 2-deoxy-D-ribose 5-phosphate. This is Deoxyribose-phosphate aldolase from Edwardsiella ictaluri (strain 93-146).